A 368-amino-acid polypeptide reads, in one-letter code: Histidinol-phosphate aminotransferase (368 aa).

An N6-(pyridoxal phosphate)lysine modification is found at K215.

Belongs to the class-II pyridoxal-phosphate-dependent aminotransferase family. Histidinol-phosphate aminotransferase subfamily. Homodimer. It depends on pyridoxal 5'-phosphate as a cofactor.

It catalyses the reaction L-histidinol phosphate + 2-oxoglutarate = 3-(imidazol-4-yl)-2-oxopropyl phosphate + L-glutamate. It participates in amino-acid biosynthesis; L-histidine biosynthesis; L-histidine from 5-phospho-alpha-D-ribose 1-diphosphate: step 7/9. The protein is Histidinol-phosphate aminotransferase (hisC) of Buchnera aphidicola subsp. Acyrthosiphon pisum (strain APS) (Acyrthosiphon pisum symbiotic bacterium).